The primary structure comprises 205 residues: Recombination protein RecR (205 aa).

Residues 58-75 (CSECQNVTDRDSDPCVLC) form a C4-type zinc finger. The Toprim domain maps to 83-182 (TVICVVESPV…AVSKIARGIP (100 aa)).

It belongs to the RecR family.

In terms of biological role, may play a role in DNA repair. It seems to be involved in an RecBC-independent recombinational process of DNA repair. It may act with RecF and RecO. The protein is Recombination protein RecR of Chlorobium phaeobacteroides (strain DSM 266 / SMG 266 / 2430).